Here is a 196-residue protein sequence, read N- to C-terminus: Nodulation protein A (196 aa).

The protein belongs to the NodA family.

It is found in the cytoplasm. Functionally, N-acyltransferase required for nodulation. Acts in the production of a small, heat-stable compound (Nod) that stimulates mitosis in various plant protoplasts. The protein is Nodulation protein A of Mesorhizobium sp. (strain 7653R).